A 402-amino-acid polypeptide reads, in one-letter code: Shaggy-related protein kinase GSK2 (402 aa).

Residues 1–38 (MDQPAPAPEPMLLDAQPPAAVACDKKQQEGEAPYAEGN) form a disordered region. One can recognise a Protein kinase domain in the interval 63–347 (YMAERVVGTG…ALDACAHPFF (285 aa)). ATP-binding positions include 69 to 77 (VGTGSFGIV) and Lys92. Catalysis depends on Asp188, which acts as the Proton acceptor.

It belongs to the protein kinase superfamily. CMGC Ser/Thr protein kinase family. GSK-3 subfamily. Interacts with DLT. Interacts with OFP8. Interacts with GRF4. Interacts with PUB24. Interacts with SMOS1. Post-translationally, autophosphorylated. Expressed in lamina joints, vascular tissue and nodes.

It localises to the cytoplasm. It is found in the nucleus. It catalyses the reaction L-seryl-[protein] + ATP = O-phospho-L-seryl-[protein] + ADP + H(+). The enzyme catalyses L-threonyl-[protein] + ATP = O-phospho-L-threonyl-[protein] + ADP + H(+). Serine-threonine kinase that acts as a negative regulator of brassinosteroid (BR) signaling. Phosphorylates DLT and BZR1, two positive regulators that mediates several BR responses. Phosphorylation of DLT and BZR1 inhibits their activities in BR signaling. Phosphorylates OFP8, a positive regulator of BR responses. Phosphorylated OFP8 shuttles from the nucleus to the cytoplasm where it is degraded by the proteasome. Phosphorylates the E3 ubiquitin-protein ligase PUB24, a negative regulator of BR signaling, which targets BZR1 and promotes its degradation via the 26S proteasome. Phosphorylation of PUB24 increases its stability. Phosphorylates the AP2-ERF transcription factor SMOS1, a positive regulator of BR signaling, which cooperatively functions in a transactivating complex with BZR1 to enhance the transcription of BR biosynthetic genes. Phosphorylation of SMOS1 leads to its degradation by an unknown mechanism. This is Shaggy-related protein kinase GSK2 from Oryza sativa subsp. japonica (Rice).